Here is a 583-residue protein sequence, read N- to C-terminus: CTP synthase (583 aa).

The amidoligase domain stretch occupies residues methionine 1–leucine 278. Residue serine 20 participates in CTP binding. Serine 20 provides a ligand contact to UTP. ATP-binding positions include serine 21 to leucine 26 and aspartate 78. Mg(2+) contacts are provided by aspartate 78 and glutamate 152. CTP is bound by residues aspartate 159 to glutamate 161, lysine 199 to glutamine 204, and lysine 235. UTP-binding positions include lysine 199–glutamine 204 and lysine 235. One can recognise a Glutamine amidotransferase type-1 domain in the interval arginine 303–glycine 551. Position 366 (glycine 366) interacts with L-glutamine. Cysteine 393 acts as the Nucleophile; for glutamine hydrolysis in catalysis. Residues leucine 394 to glutamine 397, glutamate 416, and arginine 477 each bind L-glutamine. Active-site residues include histidine 524 and glutamate 526. The segment at glutamate 560 to glycine 583 is disordered.

Belongs to the CTP synthase family. In terms of assembly, homotetramer.

It carries out the reaction UTP + L-glutamine + ATP + H2O = CTP + L-glutamate + ADP + phosphate + 2 H(+). The catalysed reaction is L-glutamine + H2O = L-glutamate + NH4(+). It catalyses the reaction UTP + NH4(+) + ATP = CTP + ADP + phosphate + 2 H(+). Its pathway is pyrimidine metabolism; CTP biosynthesis via de novo pathway; CTP from UDP: step 2/2. Allosterically activated by GTP, when glutamine is the substrate; GTP has no effect on the reaction when ammonia is the substrate. The allosteric effector GTP functions by stabilizing the protein conformation that binds the tetrahedral intermediate(s) formed during glutamine hydrolysis. Inhibited by the product CTP, via allosteric rather than competitive inhibition. Functionally, catalyzes the ATP-dependent amination of UTP to CTP with either L-glutamine or ammonia as the source of nitrogen. Regulates intracellular CTP levels through interactions with the four ribonucleotide triphosphates. In Mycolicibacterium paratuberculosis (strain ATCC BAA-968 / K-10) (Mycobacterium paratuberculosis), this protein is CTP synthase.